A 521-amino-acid polypeptide reads, in one-letter code: Chromaffin granule amine transporter (521 aa).

Topologically, residues 1–21 (MLQVVLGAPQRLLKEGRQSRK) are cytoplasmic. The chain crosses the membrane as a helical span at residues 22–42 (LVLVVVFVALLLDNMLLTVVV). Over 43–135 (PIVPTFLYAT…IEFLEEENVR (93 aa)) the chain is Lumenal, vesicle. N-linked (GlcNAc...) asparagine glycosylation is found at Asn58, Asn87, and Asn104. A helical membrane pass occupies residues 136–155 (IGILFASKALMQLLVNPFVG). Topologically, residues 156–164 (PLTNRIGYH) are cytoplasmic. A helical transmembrane segment spans residues 165–185 (IPMFVGFMIMFLSTLMFAFSG). The Lumenal, vesicle portion of the chain corresponds to 186 to 194 (TYALLFVAR). A helical transmembrane segment spans residues 195 to 215 (TLQGIGSSFSSVAGLGMLASV). Residues 216–224 (YTDNYERGR) lie on the Cytoplasmic side of the membrane. The chain crosses the membrane as a helical span at residues 225–247 (AMGIALGGLALGLLVGAPFGSVM). The Lumenal, vesicle portion of the chain corresponds to 248 to 253 (YEFVGK). Residues 254 to 276 (SSPFLILAFLALLDGALQLCILW) traverse the membrane as a helical segment. Residues 277–296 (PSKVSPESAMGTSLLTLLKD) lie on the Cytoplasmic side of the membrane. The chain crosses the membrane as a helical span at residues 297-316 (PYILVAAGSICLANMGVAIL). Over 317 to 332 (EPTLPIWMMQTMCSPE) the chain is Lumenal, vesicle. Residues 333–357 (WQLGLAFLPASVAYLIGTNLFGVLA) form a helical membrane-spanning segment. Topologically, residues 358-362 (NKMGR) are cytoplasmic. A helical transmembrane segment spans residues 363–383 (WLCSLVGMVAVGISLLCVPLA). Topologically, residues 384-394 (HNIFGLIGPNA) are lumenal, vesicle. Residues 395–415 (GLGFAIGMVDSSLMPIMGYLV) form a helical membrane-spanning segment. Residues 416–419 (DLRH) are Cytoplasmic-facing. The chain crosses the membrane as a helical span at residues 420 to 440 (TSVYGSVYAIADVAFCVGFAI). Residues 441–445 (GPSTG) are Lumenal, vesicle-facing. A helical transmembrane segment spans residues 446-467 (GVIVQVIGFPWLMVIIGTINII). The Cytoplasmic segment spans residues 468-521 (YAPLCCFLQNPPAKEEKRAILSQECPTETQMYTFQKPTKAFPLGENSDDPSSGE).

Belongs to the major facilitator superfamily. Vesicular transporter family. As to expression, adrenal gland.

Its subcellular location is the cytoplasmic vesicle. The protein localises to the secretory vesicle membrane. It is found in the secretory vesicle. It localises to the synaptic vesicle membrane. It catalyses the reaction serotonin(in) + 2 H(+)(out) = serotonin(out) + 2 H(+)(in). The enzyme catalyses (R)-noradrenaline(in) + 2 H(+)(out) = (R)-noradrenaline(out) + 2 H(+)(in). It carries out the reaction dopamine(in) + 2 H(+)(out) = dopamine(out) + 2 H(+)(in). Its activity is regulated as follows. Strongly inhibited by reserpine, ketanserin and methamphetamine. Also inhibited weakly by tetrabenazine. Its function is as follows. Electrogenic antiporter that exchanges one cationic monoamine with two intravesicular protons across the membrane of secretory and synaptic vesicles. Uses the electrochemical proton gradient established by the V-type proton-pump ATPase to accumulate high concentrations of monoamines inside the vesicles prior to their release via exocytosis. Transports catecholamines and indolamines with higher affinity for serotonin. Regulates the transvesicular monoaminergic gradient that determines the quantal size. Mediates presynaptic monoaminergic vesicle transport in the amygdala and prefrontal brain regions related with emotion processing in response to environmental stimuli. The chain is Chromaffin granule amine transporter (Slc18a1) from Rattus norvegicus (Rat).